The primary structure comprises 141 residues: Nucleoside diphosphate kinase (141 aa).

ATP-binding residues include Lys11, Phe59, Arg87, Thr93, Arg104, and Asn114. The Pros-phosphohistidine intermediate role is filled by His117.

The protein belongs to the NDK family. In terms of assembly, homotetramer. Mg(2+) serves as cofactor.

It localises to the cytoplasm. It catalyses the reaction a 2'-deoxyribonucleoside 5'-diphosphate + ATP = a 2'-deoxyribonucleoside 5'-triphosphate + ADP. The catalysed reaction is a ribonucleoside 5'-diphosphate + ATP = a ribonucleoside 5'-triphosphate + ADP. Its function is as follows. Major role in the synthesis of nucleoside triphosphates other than ATP. The ATP gamma phosphate is transferred to the NDP beta phosphate via a ping-pong mechanism, using a phosphorylated active-site intermediate. The sequence is that of Nucleoside diphosphate kinase from Actinobacillus succinogenes (strain ATCC 55618 / DSM 22257 / CCUG 43843 / 130Z).